The following is a 208-amino-acid chain: WEB family protein At2g17940 (208 aa).

The stretch at 78–113 forms a coiled coil; sequence RTLQLNTSLSNRIKTLTQELELGKKEIQRLSRTRSS.

The protein belongs to the WEB family.

The sequence is that of WEB family protein At2g17940 from Arabidopsis thaliana (Mouse-ear cress).